Here is a 145-residue protein sequence, read N- to C-terminus: MLVPKRVKHRREFRGKMRGEAKGGKTIAFGEYGLEAVESHWITNRQIEAARIAMTRFMKRGGKVWIRIFPQKSYTAKGVGVRMGSGKGAPAGWVAVVKRGKIMFEIGGVSEDVAREALRLASNKLPIKTKFVKKSSEVGGESNEG.

It belongs to the universal ribosomal protein uL16 family. Part of the 50S ribosomal subunit.

Binds 23S rRNA and is also seen to make contacts with the A and possibly P site tRNAs. The protein is Large ribosomal subunit protein uL16 of Lactobacillus johnsonii (strain CNCM I-12250 / La1 / NCC 533).